Consider the following 123-residue polypeptide: Large ribosomal subunit protein bL19 (123 aa).

The protein belongs to the bacterial ribosomal protein bL19 family.

Functionally, this protein is located at the 30S-50S ribosomal subunit interface and may play a role in the structure and function of the aminoacyl-tRNA binding site. This Bdellovibrio bacteriovorus (strain ATCC 15356 / DSM 50701 / NCIMB 9529 / HD100) protein is Large ribosomal subunit protein bL19.